The chain runs to 254 residues: MRIDVLSLFPDMFSGPMHDSIVGKAIENGHLTMPVTNFRDYSTNKHGNVDDYPFGGGAGMLLQPQPIFDALKATEEQAAAEGLPKGRVILLDPAGVTFNQHVAEDFAHEEHLTFLCGHYEGYDERIRTLVTDEVSLGDFVLTGGELASMVMIDATVRLLPGVLGNAESAPGDSFSSGLLEYPQYTRPADFRGMTVPDVLISGNHGKIEKWRQKEALRRTYQRRPDLIDHDQLTAEQKRLLADVRIEEEERASRN.

Residues Gly117 and 136-141 (LGDFVL) contribute to the S-adenosyl-L-methionine site.

The protein belongs to the RNA methyltransferase TrmD family. Homodimer.

It is found in the cytoplasm. It carries out the reaction guanosine(37) in tRNA + S-adenosyl-L-methionine = N(1)-methylguanosine(37) in tRNA + S-adenosyl-L-homocysteine + H(+). Functionally, specifically methylates guanosine-37 in various tRNAs. In Levilactobacillus brevis (strain ATCC 367 / BCRC 12310 / CIP 105137 / JCM 1170 / LMG 11437 / NCIMB 947 / NCTC 947) (Lactobacillus brevis), this protein is tRNA (guanine-N(1)-)-methyltransferase.